The following is a 473-amino-acid chain: Photosystem II CP43 reaction center protein (473 aa).

Residues 1–14 (MKILYSQRRFYHVE) constitute a propeptide that is removed on maturation. Position 15 is an N-acetylthreonine (Thr15). At Thr15 the chain carries Phosphothreonine. The next 5 helical transmembrane spans lie at 69 to 93 (LFEV…PHLA), 134 to 155 (LIGP…KDKN), 178 to 200 (KALY…RKIT), 255 to 275 (KPFA…LSYS), and 291 to 312 (WFNN…ASQA). A [CaMn4O5] cluster-binding site is contributed by Glu367. The chain crosses the membrane as a helical span at residues 447–471 (RARAAAAGFEKGIDRDFEPVLSMTP).

The protein belongs to the PsbB/PsbC family. PsbC subfamily. In terms of assembly, PSII is composed of 1 copy each of membrane proteins PsbA, PsbB, PsbC, PsbD, PsbE, PsbF, PsbH, PsbI, PsbJ, PsbK, PsbL, PsbM, PsbT, PsbX, PsbY, PsbZ, Psb30/Ycf12, at least 3 peripheral proteins of the oxygen-evolving complex and a large number of cofactors. It forms dimeric complexes. The cofactor is Binds multiple chlorophylls and provides some of the ligands for the Ca-4Mn-5O cluster of the oxygen-evolving complex. It may also provide a ligand for a Cl- that is required for oxygen evolution. PSII binds additional chlorophylls, carotenoids and specific lipids..

Its subcellular location is the plastid. It localises to the chloroplast thylakoid membrane. One of the components of the core complex of photosystem II (PSII). It binds chlorophyll and helps catalyze the primary light-induced photochemical processes of PSII. PSII is a light-driven water:plastoquinone oxidoreductase, using light energy to abstract electrons from H(2)O, generating O(2) and a proton gradient subsequently used for ATP formation. The protein is Photosystem II CP43 reaction center protein of Physcomitrium patens (Spreading-leaved earth moss).